The chain runs to 291 residues: Gamma-sarcoglycan (291 aa).

A helical; Signal-anchor for type II membrane protein transmembrane segment spans residues 38 to 58; it reads LFVLLLLIILLVNFALTIWIL. Residues 59–291 are Extracellular-facing; sequence KVMWFSPTGM…TCHEHSHICL (233 aa). N-linked (GlcNAc...) asparagine glycosylation occurs at Asn-110. Disulfide bonds link Cys-265–Cys-290 and Cys-267–Cys-283.

The protein belongs to the sarcoglycan beta/delta/gamma/zeta family. In terms of assembly, interacts with the syntrophin SNTA1. Cross-link to form 2 major subcomplexes: one consisting of SGCB, SGCD and SGCG and the other consisting of SGCB and SGCD. The association between SGCB and SGCG is particularly strong while SGCA is loosely associated with the other sarcoglycans. Interacts with FLNC. Post-translationally, disulfide bonds are present.

Its subcellular location is the cell membrane. It localises to the sarcolemma. The protein resides in the cytoplasm. It is found in the cytoskeleton. Component of the sarcoglycan complex, a subcomplex of the dystrophin-glycoprotein complex which forms a link between the F-actin cytoskeleton and the extracellular matrix. This Canis lupus familiaris (Dog) protein is Gamma-sarcoglycan (SGCG).